The chain runs to 129 residues: Ribonuclease P protein component (129 aa).

This sequence belongs to the RnpA family. Consists of a catalytic RNA component (M1 or rnpB) and a protein subunit.

It catalyses the reaction Endonucleolytic cleavage of RNA, removing 5'-extranucleotides from tRNA precursor.. Functionally, RNaseP catalyzes the removal of the 5'-leader sequence from pre-tRNA to produce the mature 5'-terminus. It can also cleave other RNA substrates such as 4.5S RNA. The protein component plays an auxiliary but essential role in vivo by binding to the 5'-leader sequence and broadening the substrate specificity of the ribozyme. This Prochlorococcus marinus (strain MIT 9515) protein is Ribonuclease P protein component.